Here is a 393-residue protein sequence, read N- to C-terminus: Arginine biosynthesis bifunctional protein ArgJ (393 aa).

Residues Thr-142, Lys-168, Thr-179, Glu-265, Asn-388, and Ser-393 each coordinate substrate. Catalysis depends on Thr-179, which acts as the Nucleophile.

Belongs to the ArgJ family. Heterotetramer of two alpha and two beta chains.

Its subcellular location is the cytoplasm. It carries out the reaction N(2)-acetyl-L-ornithine + L-glutamate = N-acetyl-L-glutamate + L-ornithine. The catalysed reaction is L-glutamate + acetyl-CoA = N-acetyl-L-glutamate + CoA + H(+). It participates in amino-acid biosynthesis; L-arginine biosynthesis; L-ornithine and N-acetyl-L-glutamate from L-glutamate and N(2)-acetyl-L-ornithine (cyclic): step 1/1. It functions in the pathway amino-acid biosynthesis; L-arginine biosynthesis; N(2)-acetyl-L-ornithine from L-glutamate: step 1/4. Its function is as follows. Catalyzes two activities which are involved in the cyclic version of arginine biosynthesis: the synthesis of N-acetylglutamate from glutamate and acetyl-CoA as the acetyl donor, and of ornithine by transacetylation between N(2)-acetylornithine and glutamate. The sequence is that of Arginine biosynthesis bifunctional protein ArgJ from Desulfotalea psychrophila (strain LSv54 / DSM 12343).